The chain runs to 256 residues: uncharacterized protein (256 aa).

A signal peptide spans 1-24; sequence MIKRVNKLVIGISLLFLVISITAG. Cys-25 carries N-palmitoyl cysteine lipidation. Cys-25 carries S-diacylglycerol cysteine lipidation.

Belongs to the staphylococcal tandem lipoprotein family.

The protein localises to the cell membrane. This is an uncharacterized protein from Staphylococcus aureus (strain bovine RF122 / ET3-1).